A 121-amino-acid chain; its full sequence is Flagellar protein FliT (121 aa).

Positions 1-50 (MNHAPHLYFAWQQLVDKSQLMLRLATEEQWDELIASEMAYVNAVQEIAHL) are required for homodimerization. The segment at 60–98 (MQEQLRPMLRLILDNESKVKQLLQIRMDELAKLVGQSSV) is fliD binding.

Belongs to the FliT family. In terms of assembly, homodimer. Interacts with FliD and FlhC.

Its subcellular location is the cytoplasm. The protein localises to the cytosol. In terms of biological role, dual-function protein that regulates the transcription of class 2 flagellar operons and that also acts as an export chaperone for the filament-capping protein FliD. As a transcriptional regulator, acts as an anti-FlhDC factor; it directly binds FlhC, thus inhibiting the binding of the FlhC/FlhD complex to class 2 promoters, resulting in decreased expression of class 2 flagellar operons. As a chaperone, effects FliD transition to the membrane by preventing its premature polymerization, and by directing it to the export apparatus. This chain is Flagellar protein FliT, found in Shigella sonnei (strain Ss046).